Consider the following 348-residue polypeptide: uncharacterized protein (348 aa).

Residues 132 to 348 are disordered; the sequence is SECRRSSDAL…QGTRRDSARL (217 aa). The segment covering 161-178 has biased composition (low complexity); that stretch reads STAPIPNAAISSARSSAR. Residues 192–207 are compositionally biased toward polar residues; sequence SRSSSETRSPGGTVQP. Residues 227 to 273 are compositionally biased toward low complexity; that stretch reads AAGSLLPAPRPPASSASSPQAAAPAAPSATRLPRRTTPSAPRPSSRP. The span at 274–287 shows a compositional bias: pro residues; that stretch reads ARPPIPAARPPPRR. Low complexity predominate over residues 288-310; sequence TPGTPRPAAARARAPAGCSPARR.

This is an uncharacterized protein from Streptomyces fradiae (Streptomyces roseoflavus).